Consider the following 376-residue polypeptide: Glutamate 5-kinase (376 aa).

Residue K15 participates in ATP binding. Positions 56, 143, and 155 each coordinate substrate. 175-176 contributes to the ATP binding site; sequence SD. Positions 281–358 constitute a PUA domain; sequence KGTLTIDAGA…PDVMSILGVS (78 aa).

It belongs to the glutamate 5-kinase family.

It is found in the cytoplasm. It catalyses the reaction L-glutamate + ATP = L-glutamyl 5-phosphate + ADP. The protein operates within amino-acid biosynthesis; L-proline biosynthesis; L-glutamate 5-semialdehyde from L-glutamate: step 1/2. In terms of biological role, catalyzes the transfer of a phosphate group to glutamate to form L-glutamate 5-phosphate. This is Glutamate 5-kinase from Rhodopseudomonas palustris (strain HaA2).